We begin with the raw amino-acid sequence, 120 residues long: NAD(P)H-quinone oxidoreductase subunit 3, chloroplastic (120 aa).

3 consecutive transmembrane segments (helical) span residues 9 to 29, 64 to 84, and 88 to 108; these read IFWA…LISG, MFAL…PWAM, and VLGV…ILGL.

This sequence belongs to the complex I subunit 3 family. NDH is composed of at least 16 different subunits, 5 of which are encoded in the nucleus.

Its subcellular location is the plastid. It localises to the chloroplast thylakoid membrane. It catalyses the reaction a plastoquinone + NADH + (n+1) H(+)(in) = a plastoquinol + NAD(+) + n H(+)(out). It carries out the reaction a plastoquinone + NADPH + (n+1) H(+)(in) = a plastoquinol + NADP(+) + n H(+)(out). NDH shuttles electrons from NAD(P)H:plastoquinone, via FMN and iron-sulfur (Fe-S) centers, to quinones in the photosynthetic chain and possibly in a chloroplast respiratory chain. The immediate electron acceptor for the enzyme in this species is believed to be plastoquinone. Couples the redox reaction to proton translocation, and thus conserves the redox energy in a proton gradient. This is NAD(P)H-quinone oxidoreductase subunit 3, chloroplastic from Lobularia maritima (Sweet alyssum).